The primary structure comprises 243 residues: MPTDADYLIDSQDPRHPANLICTLCKQFFDFNWCTGTGGGISIKHPQTGHLYVAPSGVQKEQMKPHDMFVVDGKSYEYLRIPPGLKPSACTPLFNACYKYKSAGAIVHTHSLNAVTCSLIFGQEFRIRGVEQIKAIPSDRKDPSTGKVLNLNWDDTCVIPIIENRPHEDQLEDPLMETFEKYPHACAVIVRRHGIFVWGPTIEKAKVINEALDYLMELAVKMHQLGIPPDCSVGQESKYISKH.

A substrate-binding site is contributed by C90. H108 and H110 together coordinate Zn(2+). Catalysis depends on E131, which acts as the Proton donor/acceptor. Residue H193 coordinates Zn(2+).

The protein belongs to the aldolase class II family. MtnB subfamily. Zn(2+) is required as a cofactor.

It is found in the cytoplasm. It carries out the reaction 5-(methylsulfanyl)-D-ribulose 1-phosphate = 5-methylsulfanyl-2,3-dioxopentyl phosphate + H2O. Its pathway is amino-acid biosynthesis; L-methionine biosynthesis via salvage pathway; L-methionine from S-methyl-5-thio-alpha-D-ribose 1-phosphate: step 2/6. Catalyzes the dehydration of methylthioribulose-1-phosphate (MTRu-1-P) into 2,3-diketo-5-methylthiopentyl-1-phosphate (DK-MTP-1-P). The chain is Methylthioribulose-1-phosphate dehydratase from Zygosaccharomyces rouxii (strain ATCC 2623 / CBS 732 / NBRC 1130 / NCYC 568 / NRRL Y-229).